Reading from the N-terminus, the 351-residue chain is MNPPKSAPDAQGLSYRDAGVDIDAGDALIDKIKPFAKKTLRDGVLGGIGGFGALFEVPKKYREPVLVSGTDGVGTKLKLAFHLNKHDTVGQDLVAMSVNDILVQGAEPLFFLDYFACGKLDVDTAATVVKGIAHGCELSGCALIGGETAEMPGMYPDGEYDLAGFAVGAVEKSKIIDGSTIGAGDVVLGLASSGIHSNGFSLVRKIIERANPDLSADFHGRSLADTLMAPTRIYVKPLLALMQKLTVKGMAHITGGGLVENIPRVLREGLTAELDQNAWPLPPLFKWLQEHGGVADAEMHRVFNCGIGMAVIVAAADADAAIADLTAAGEQVWKIGTVRASREGEAQTVVV.

This sequence belongs to the AIR synthase family.

It is found in the cytoplasm. It catalyses the reaction 2-formamido-N(1)-(5-O-phospho-beta-D-ribosyl)acetamidine + ATP = 5-amino-1-(5-phospho-beta-D-ribosyl)imidazole + ADP + phosphate + H(+). Its pathway is purine metabolism; IMP biosynthesis via de novo pathway; 5-amino-1-(5-phospho-D-ribosyl)imidazole from N(2)-formyl-N(1)-(5-phospho-D-ribosyl)glycinamide: step 2/2. The sequence is that of Phosphoribosylformylglycinamidine cyclo-ligase from Burkholderia vietnamiensis (strain G4 / LMG 22486) (Burkholderia cepacia (strain R1808)).